The chain runs to 293 residues: Extracellular metalloprotease MGYG_00389 (293 aa).

The N-terminal stretch at 1–19 (MRFSVFLPAIAALSSAVAA) is a signal peptide. Residues asparagine 49 and asparagine 53 are each glycosylated (N-linked (GlcNAc...) asparagine). Histidine 184 is a binding site for Zn(2+). Residue glutamate 185 is part of the active site. Zn(2+) is bound at residue histidine 188. Cysteine 223 and cysteine 249 are disulfide-bonded. Positions 270-293 (GSGSGSVTRPRPKPPVLMDYEHRL) are disordered.

Belongs to the peptidase M43B family.

Its subcellular location is the secreted. Functionally, secreted metalloproteinase that allows assimilation of proteinaceous substrates. Plays a pivotal role as a pathogenicity determinant during infections and contributes to the ability of the pathogen to persist within the mammalian host. The chain is Extracellular metalloprotease MGYG_00389 from Arthroderma gypseum (strain ATCC MYA-4604 / CBS 118893) (Microsporum gypseum).